The chain runs to 291 residues: Phosphate import ATP-binding protein PstB (291 aa).

The region spanning 45–286 (YSTQNLDLWY…PADKQTEDYI (242 aa)) is the ABC transporter domain. 77–84 (GPSGCGKS) contacts ATP.

The protein belongs to the ABC transporter superfamily. Phosphate importer (TC 3.A.1.7) family. As to quaternary structure, the complex is composed of two ATP-binding proteins (PstB), two transmembrane proteins (PstC and PstA) and a solute-binding protein (PstS).

The protein resides in the cell membrane. It carries out the reaction phosphate(out) + ATP + H2O = ADP + 2 phosphate(in) + H(+). Functionally, part of the ABC transporter complex PstSACB involved in phosphate import. Responsible for energy coupling to the transport system. The sequence is that of Phosphate import ATP-binding protein PstB from Staphylococcus epidermidis (strain ATCC 12228 / FDA PCI 1200).